We begin with the raw amino-acid sequence, 61 residues long: Small ribosomal subunit protein uS14 (61 aa).

Zn(2+)-binding residues include Cys-24, Cys-27, Cys-40, and Cys-43.

Belongs to the universal ribosomal protein uS14 family. Zinc-binding uS14 subfamily. In terms of assembly, part of the 30S ribosomal subunit. Contacts proteins S3 and S10. Zn(2+) is required as a cofactor.

Functionally, binds 16S rRNA, required for the assembly of 30S particles and may also be responsible for determining the conformation of the 16S rRNA at the A site. In Staphylococcus carnosus (strain TM300), this protein is Small ribosomal subunit protein uS14.